The sequence spans 118 residues: Non-specific lipid-transfer protein 2 (118 aa).

Residues 1 to 25 (MARGMKLACVVLVICMVVIAPMAEG) form the signal peptide. Disulfide bonds link cysteine 29–cysteine 76, cysteine 39–cysteine 53, cysteine 54–cysteine 99, and cysteine 74–cysteine 113.

The protein belongs to the plant LTP family.

Plant non-specific lipid-transfer proteins transfer phospholipids as well as galactolipids across membranes. May play a role in wax or cutin deposition in the cell walls of expanding epidermal cells and certain secretory tissues. Binds saturated fatty acids, jasmonic acid and, with highest efficiency, unsaturated fatty acids and lysolipids. The polypeptide is Non-specific lipid-transfer protein 2 (Lens culinaris (Lentil)).